A 154-amino-acid chain; its full sequence is PHA granule-associated protein PhaP (154 aa).

It is found in the cytoplasmic granule. Functionally, polyhydroxyalkanoate (PHA) granule structural protein. Important for PHA granule formation and separation, and for cell growth. This is PHA granule-associated protein PhaP (phaP) from Haloferax mediterranei (strain ATCC 33500 / DSM 1411 / JCM 8866 / NBRC 14739 / NCIMB 2177 / R-4) (Halobacterium mediterranei).